The chain runs to 389 residues: Metal tolerance protein 2 (389 aa).

Residues 1–81 (MGFRLAHLAA…GGEASERIFR (81 aa)) lie on the Cytoplasmic side of the membrane. The helical transmembrane segment at 82–102 (LGLAADVVLTVGKAVTGYLSG) threads the bilayer. At 103-104 (ST) the chain is on the vacuolar side. The chain crosses the membrane as a helical span at residues 105 to 125 (AIAADAAHSLSDIVLSGVALL). Topologically, residues 126–148 (SYKAAKAPRDKEHPYGHGKFESL) are cytoplasmic. Residues 149-169 (GALGISSMLLVTAGGIAWHAF) form a helical membrane-spanning segment. At 170 to 206 (DVLQGVMSSAPDIIGNVSHAHHSHGSSGHHHGIDLEH) the chain is on the vacuolar side. The helical transmembrane segment at 207 to 227 (PILALSVTAFAISVKEGLYWI) threads the bilayer. Residues 228–250 (TKRAGEKEGSGLMKANAWHHRSD) lie on the Cytoplasmic side of the membrane. The helical transmembrane segment at 251-271 (AISSVVALLGVGGSILGVPYL) threads the bilayer. Residues 272 to 275 (DPLA) are Vacuolar-facing. A helical membrane pass occupies residues 276–296 (GLVVSGMILKAGVHTGYESVL). The Cytoplasmic segment spans residues 297 to 389 (ELVDAAVDPS…SLQPLNQNAL (93 aa)).

This sequence belongs to the cation diffusion facilitator (CDF) transporter (TC 2.A.4) family. SLC30A subfamily.

The protein resides in the vacuole membrane. Functionally, involved in sequestration of excess metal in the cytoplasm into vacuoles to maintain metal homeostasis. The chain is Metal tolerance protein 2 (MTP2) from Oryza sativa subsp. japonica (Rice).